The sequence spans 1336 residues: Glutamate receptor ionotropic, NMDA 2D (1336 aa).

The N-terminal stretch at 1-27 is a signal peptide; sequence MRGAGGPRGPRGPAKMLLLLALACASP. Residues 28–582 are Extracellular-facing; sequence FPEEAPGPGG…SPSAFLEPYS (555 aa). N-linked (GlcNAc...) asparagine glycosylation occurs at asparagine 92. Cysteine 104 and cysteine 348 are oxidised to a cystine. Asparagine 352, asparagine 366, asparagine 384, and asparagine 467 each carry an N-linked (GlcNAc...) asparagine glycan. 2 disulfides stabilise this stretch: cysteine 455–cysteine 483 and cysteine 462–cysteine 484. Positions 539, 541, and 546 each coordinate L-glutamate. Asparagine 569 carries an N-linked (GlcNAc...) asparagine glycan. Residues 583-604 form a helical membrane-spanning segment; that stretch reads PAVWVMMFVMCLTVVAVTVFIF. The Cytoplasmic segment spans residues 605–629; that stretch reads EYLSPVGYNRSLATGKRPGGSTFTI. Residues 630–641 constitute an intramembrane region (discontinuously helical); that stretch reads GKSIWLLWALVF. The pore-forming stretch occupies residues 631–650; it reads KSIWLLWALVFNNSVPVENP. The Cytoplasmic portion of the chain corresponds to 642 to 653; the sequence is NNSVPVENPRGT. The chain crosses the membrane as a helical span at residues 654-674; sequence TSKIMVLVWAFFAVIFLASYT. At 675–843 the chain is on the extracellular side; it reads ANLAAFMIQE…EVMSSKLDID (169 aa). The L-glutamate site is built by serine 717, threonine 718, and aspartate 759. A disulfide bridge links cysteine 773 with cysteine 828. Residues 844–867 form a helical membrane-spanning segment; the sequence is NMAGVFYMLLVAMGLSLLVFAWEH. Topologically, residues 868 to 1336 are cytoplasmic; the sequence is LVYWRLRHCL…AHFSSLESEV (469 aa). Disordered stretches follow at residues 900 to 934, 981 to 1123, and 1225 to 1336; these read EAAP…PFVP, RAAP…SLGG, and RCGC…ESEV. The span at 902-932 shows a compositional bias: pro residues; that stretch reads APPPAKPPPPPQPLPSPAYPAPRPAPGPAPF. A compositionally biased stretch (low complexity) spans 981–991; the sequence is RAAPRGAAGRP. Pro residues predominate over residues 992-1006; that stretch reads LSPPAAQPPQKPPPS. A compositionally biased stretch (low complexity) spans 1035–1044; sequence AAAATAVGPP. The span at 1074-1089 shows a compositional bias: gly residues; that stretch reads PGAGGAGGTGGAGGGA. Over residues 1091-1104 the composition is skewed to pro residues; it reads AAPPPCRAAPPPCP. Basic residues predominate over residues 1225 to 1240; the sequence is RCGCPRSHPHRPRASH. Arginine 1316 carries the post-translational modification Omega-N-methylarginine. At serine 1326 the chain carries Phosphoserine. The PDZ-binding signature appears at 1334-1336; sequence SEV.

The protein belongs to the glutamate-gated ion channel (TC 1.A.10.1) family. NR2D/GRIN2D subfamily. As to quaternary structure, heterotetramer. Forms heterotetrameric channels composed of two GluN1/zeta subunits (GRIN1), and two identical GluN2/epsilon subunits (GRIN2A, GRIN2B, GRIN2C or GRIN2D) or GluN3 subunits (GRIN3A or GRIN3B) (in vitro). In vivo, the subunit composition may depend on the expression levels of the different subunits. Interacts with PDZ domains of PATJ and DLG4.

It localises to the cell membrane. The protein localises to the postsynaptic cell membrane. It carries out the reaction Ca(2+)(in) = Ca(2+)(out). The enzyme catalyses Na(+)(in) = Na(+)(out). The catalysed reaction is K(+)(in) = K(+)(out). Component of N-methyl-D-aspartate (NMDA) receptors (NMDARs) that function as heterotetrameric, ligand-gated cation channels with high calcium permeability and voltage-dependent block by Mg(2+). Participates in synaptic plasticity for learning and memory formation. Channel activation requires binding of the neurotransmitter L-glutamate to the GluN2 subunit, glycine or D-serine binding to the GluN1 subunit, plus membrane depolarization to eliminate channel inhibition by Mg(2+). NMDARs mediate simultaneously the potasium efflux and the influx of calcium and sodium. Each GluN2 subunit confers differential attributes to channel properties, including activation, deactivation and desensitization kinetics, pH sensitivity, Ca2(+) permeability, and binding to allosteric modulators. The sequence is that of Glutamate receptor ionotropic, NMDA 2D from Homo sapiens (Human).